The following is a 153-amino-acid chain: Natriuretic peptides A (153 aa).

Residues 1-25 (MGSFSTIMASFLLFLAFQLQGQTRA) form the signal peptide. Propeptides lie at residues 26–123 (NPVY…AAPR) and 93–103 (DGGALGRGSWD). Residues 54–105 (EDEVMPPQVLSDQSEEERAALSPLPEVPPWTGEVNPAQRDGGALGRGSWDSS) form a disordered region. A Phosphoserine modification is found at S129. A disulfide bridge links C130 with C146. An important for degradation of atrial natriuretic peptide by IDE region spans residues 147–151 (NSFRY).

Belongs to the natriuretic peptide family. As to quaternary structure, homodimer; disulfide-linked antiparallel dimer. In terms of processing, the precursor molecule is proteolytically cleaved by CORIN at Arg-123 to produce the atrial natriuretic peptide. Undergoes further proteolytic cleavage by unknown proteases to give rise to long-acting natriuretic peptide, vessel dilator and kaliuretic peptide. Additional processing gives rise to the auriculin and atriopeptin peptides. In the kidneys, alternative processing by an unknown protease results in the peptide urodilatin. Cleavage by MME initiates degradation of the factor and thereby regulates its activity. Degradation by IDE results in reduced activation of NPR1 (in vitro). During IDE degradation, the resulting products can temporarily stimulate NPR2 to produce cGMP, before the fragments are completely degraded and inactivated by IDE (in vitro). Post-translationally, degraded by IDE. In terms of processing, phosphorylation on Ser-129 decreases vasorelaxant activity.

The protein resides in the secreted. It localises to the perikaryon. Its subcellular location is the cell projection. Functionally, hormone that plays a key role in mediating cardio-renal homeostasis, and is involved in vascular remodeling and regulating energy metabolism. Acts by specifically binding and stimulating NPR1 to produce cGMP, which in turn activates effector proteins, such as PRKG1, that drive various biological responses. Regulates vasodilation, natriuresis, diuresis and aldosterone synthesis and is therefore essential for regulating blood pressure, controlling the extracellular fluid volume and maintaining the fluid-electrolyte balance. Also involved in inhibiting cardiac remodeling and cardiac hypertrophy by inducing cardiomyocyte apoptosis and attenuating the growth of cardiomyocytes and fibroblasts. Plays a role in female pregnancy by promoting trophoblast invasion and spiral artery remodeling in uterus, and thus prevents pregnancy-induced hypertension. In adipose tissue, acts in various cGMP- and PKG-dependent pathways to regulate lipid metabolism and energy homeostasis. This includes up-regulating lipid metabolism and mitochondrial oxygen utilization by activating the AMP-activated protein kinase (AMPK), and increasing energy expenditure by acting via MAPK11 to promote the UCP1-dependent thermogenesis of brown adipose tissue. Binds the clearance receptor NPR3 which removes the hormone from circulation. In terms of biological role, may have a role in cardio-renal homeostasis through regulation of natriuresis, diuresis, vasodilation, and inhibiting aldosterone synthesis. In vitro, promotes the production of cGMP and induces vasodilation. May promote natriuresis, at least in part, by enhancing prostaglandin E2 synthesis resulting in the inhibition of renal Na+-K+-ATPase. However reports on the involvement of this peptide in mammal blood volume and blood pressure homeostasis are conflicting; according to a report, in vivo it is not sufficient to activate cGMP and does not inhibit collecting duct transport nor effect diuresis and natriuresis. Appears to bind to specific receptors that are distinct from the receptors bound by atrial natriuretic peptide and vessel dilator. Possibly enhances protein excretion in urine by decreasing proximal tubular protein reabsorption. Its function is as follows. May have a role in cardio-renal homeostasis through regulation of natriuresis, diuresis, and vasodilation. In vitro, promotes the production of cGMP and induces vasodilation. May promote natriuresis, at least in part, by enhancing prostaglandin E2 synthesis resulting in the inhibition of renal Na+-K+-ATPase. However reports on the involvement of this peptide in mammal blood volume and blood pressure homeostasis are conflicting; according to a report it is not sufficient to activate cGMP and does not inhibit collecting duct transport nor effect diuresis and natriuresis. Appears to bind to specific receptors that are distinct from the receptors bound by the atrial natriuretic and long-acting natriuretic peptides. Possibly functions in protein excretion in urine by maintaining the integrity of the proximal tubules and enhancing protein excretion by decreasing proximal tubular protein reabsorption. May have a role in cardio-renal homeostasis through regulation of diuresis and inhibiting aldosterone synthesis. In vitro, promotes the production of cGMP and induces vasodilation. May promote natriuresis, at least in part, by enhancing prostaglandin E2 synthesis resulting in the inhibition of renal Na+-K+-ATPase. May have a role in potassium excretion but not sodium excretion (natriuresis). Possibly enhances protein excretion in urine by decreasing proximal tubular protein reabsorption. Functionally, hormone produced in the kidneys that appears to be important for maintaining cardio-renal homeostasis. Mediates vasodilation, natriuresis and diuresis primarily in the renal system, in order to maintain the extracellular fluid volume and control the fluid-electrolyte balance. Specifically binds and stimulates cGMP production by renal transmembrane receptors, likely NPR1. Urodilatin not ANP, may be the natriuretic peptide responsible for the regulation of sodium and water homeostasis in the kidney. In terms of biological role, may have a role in cardio-renal homeostasis through regulation of natriuresis and vasodilation. In vivo promotes natriuresis and in vitro, vasodilates renal artery strips. Its function is as follows. May have a role in cardio-renal homeostasis through regulation of regulation of natriuresis and vasodilation. In vivo promotes natriuresis. In vitro, vasodilates intestinal smooth muscle but not smooth muscle strips. May have a role in cardio-renal homeostasis through regulation of natriuresis and vasodilation. In vivo promotes natriuresis. In vitro, selectively vasodilates intestinal and vascular smooth muscle strips. Functionally, may have a role in cardio-renal homeostasis through regulation of natriuresis and vasodilation. In vivo promotes natriuresis. In vitro, selectively vasodilates intestinal smooth muscle but not vascular smooth muscle strips. This is Natriuretic peptides A (NPPA) from Equus caballus (Horse).